The following is a 661-amino-acid chain: Fusaric acid cluster transcription factor FUB12 (661 aa).

Positions 17–48 (CVPCRTRKIKCNAAVVGLPCGSCVSRECPDEC) form a DNA-binding region, zn(2)-C6 fungal-type. Disordered stretches follow at residues 57-131 (TVKG…RPPG) and 151-185 (SAAQ…QLDD). The segment covering 73–98 (PDTNGSILSPRQQQLPTNVSRQTTDS) has biased composition (polar residues). Positions 99–109 (SHSDPVEESIH) are enriched in basic and acidic residues. Positions 110-119 (ASHTGSSLRN) are enriched in polar residues. Basic and acidic residues predominate over residues 120–129 (DTPHSRDRRP).

It is found in the nucleus. Functionally, transcription factor that is involved in the formation of the two Fusaric acid derivatives, dehydrofusaric acid and fusarinolic acid, serving as a detoxification mechanism. This Gibberella fujikuroi (strain CBS 195.34 / IMI 58289 / NRRL A-6831) (Bakanae and foot rot disease fungus) protein is Fusaric acid cluster transcription factor FUB12.